The primary structure comprises 93 residues: Pyrimidine/purine nucleoside phosphorylase (93 aa).

The protein belongs to the nucleoside phosphorylase PpnP family.

The catalysed reaction is a purine D-ribonucleoside + phosphate = a purine nucleobase + alpha-D-ribose 1-phosphate. It catalyses the reaction adenosine + phosphate = alpha-D-ribose 1-phosphate + adenine. The enzyme catalyses cytidine + phosphate = cytosine + alpha-D-ribose 1-phosphate. It carries out the reaction guanosine + phosphate = alpha-D-ribose 1-phosphate + guanine. The catalysed reaction is inosine + phosphate = alpha-D-ribose 1-phosphate + hypoxanthine. It catalyses the reaction thymidine + phosphate = 2-deoxy-alpha-D-ribose 1-phosphate + thymine. The enzyme catalyses uridine + phosphate = alpha-D-ribose 1-phosphate + uracil. It carries out the reaction xanthosine + phosphate = alpha-D-ribose 1-phosphate + xanthine. In terms of biological role, catalyzes the phosphorolysis of diverse nucleosides, yielding D-ribose 1-phosphate and the respective free bases. Can use uridine, adenosine, guanosine, cytidine, thymidine, inosine and xanthosine as substrates. Also catalyzes the reverse reactions. This is Pyrimidine/purine nucleoside phosphorylase from Magnetococcus marinus (strain ATCC BAA-1437 / JCM 17883 / MC-1).